Here is a 240-residue protein sequence, read N- to C-terminus: Uridylate kinase (240 aa).

13–16 (KFSG) lines the ATP pocket. Glycine 55 lines the UMP pocket. ATP is bound by residues glycine 56 and arginine 60. Residues aspartate 76 and 137-144 (TGNPFFTT) contribute to the UMP site. ATP-binding residues include threonine 164, tyrosine 170, and aspartate 173.

It belongs to the UMP kinase family. Homohexamer.

It is found in the cytoplasm. It catalyses the reaction UMP + ATP = UDP + ADP. Its pathway is pyrimidine metabolism; CTP biosynthesis via de novo pathway; UDP from UMP (UMPK route): step 1/1. Its activity is regulated as follows. Inhibited by UTP. Its function is as follows. Catalyzes the reversible phosphorylation of UMP to UDP. In Helicobacter pylori (strain HPAG1), this protein is Uridylate kinase.